Consider the following 697-residue polypeptide: Portal protein (697 aa).

A disordered region spans residues 633–697 (MSREAAGGVP…RRAGGPYGFH (65 aa)). Residues 664 to 689 (ITADEERRGPERVGRFRNGGPDDPRR) are compositionally biased toward basic and acidic residues.

Belongs to the herpesviridae portal protein family. Homododecamerizes. Interacts with terminase subunits TRM1 and TRM3.

It is found in the virion. Its subcellular location is the host nucleus. Its function is as follows. Forms a portal in the viral capsid through which viral DNA is translocated during DNA packaging. Assembles as a dodecamer at a single fivefold axe of the T=16 icosahedric capsid. Binds to the molecular motor that translocates the viral DNA, termed terminase. The polypeptide is Portal protein (UL104) (Homo sapiens (Human)).